The following is a 314-amino-acid chain: Methionyl-tRNA formyltransferase (314 aa).

Residue 110 to 113 participates in (6S)-5,6,7,8-tetrahydrofolate binding; sequence SLLP.

Belongs to the Fmt family.

The catalysed reaction is L-methionyl-tRNA(fMet) + (6R)-10-formyltetrahydrofolate = N-formyl-L-methionyl-tRNA(fMet) + (6S)-5,6,7,8-tetrahydrofolate + H(+). Attaches a formyl group to the free amino group of methionyl-tRNA(fMet). The formyl group appears to play a dual role in the initiator identity of N-formylmethionyl-tRNA by promoting its recognition by IF2 and preventing the misappropriation of this tRNA by the elongation apparatus. The chain is Methionyl-tRNA formyltransferase from Lactobacillus johnsonii (strain CNCM I-12250 / La1 / NCC 533).